Here is a 127-residue protein sequence, read N- to C-terminus: Glycine cleavage system H protein (127 aa).

Residues 22 to 104 (KVRIGITHFA…YEKAWMIVVE (83 aa)) enclose the Lipoyl-binding domain. Lys63 carries the post-translational modification N6-lipoyllysine.

Belongs to the GcvH family. As to quaternary structure, the glycine cleavage system is composed of four proteins: P, T, L and H. (R)-lipoate is required as a cofactor.

Its function is as follows. The glycine cleavage system catalyzes the degradation of glycine. The H protein shuttles the methylamine group of glycine from the P protein to the T protein. Functionally, is also involved in protein lipoylation via its role as an octanoyl/lipoyl carrier protein intermediate. This chain is Glycine cleavage system H protein, found in Bacillus pumilus (strain SAFR-032).